The chain runs to 319 residues: D-alanine--D-alanine ligase (319 aa).

The ATP-grasp domain occupies 120–315 (KRVLAQAGVP…YPELLRRLVE (196 aa)). 147–198 (DPPFFVKPANTGSSVGISRVERFQDLEAALALAFRYDEKAVVEKALSPVREL) is an ATP binding site. Residues Asp-270, Glu-282, and Asn-284 each contribute to the Mg(2+) site.

Belongs to the D-alanine--D-alanine ligase family. The cofactor is Mg(2+). It depends on Mn(2+) as a cofactor.

Its subcellular location is the cytoplasm. It catalyses the reaction 2 D-alanine + ATP = D-alanyl-D-alanine + ADP + phosphate + H(+). It functions in the pathway cell wall biogenesis; peptidoglycan biosynthesis. In terms of biological role, cell wall formation. This chain is D-alanine--D-alanine ligase, found in Thermus thermophilus (strain ATCC BAA-163 / DSM 7039 / HB27).